A 69-amino-acid chain; its full sequence is DNA-directed RNA polymerase subunit epsilon (69 aa).

Belongs to the RNA polymerase subunit epsilon family. As to quaternary structure, RNAP is composed of a core of 2 alpha, a beta and a beta' subunit. The core is associated with a delta subunit, and at least one of epsilon or omega. When a sigma factor is associated with the core the holoenzyme is formed, which can initiate transcription.

The catalysed reaction is RNA(n) + a ribonucleoside 5'-triphosphate = RNA(n+1) + diphosphate. A non-essential component of RNA polymerase (RNAP). This Bacillus velezensis (strain DSM 23117 / BGSC 10A6 / LMG 26770 / FZB42) (Bacillus amyloliquefaciens subsp. plantarum) protein is DNA-directed RNA polymerase subunit epsilon.